We begin with the raw amino-acid sequence, 303 residues long: tRNA pseudouridine synthase B (303 aa).

Aspartate 47 acts as the Nucleophile in catalysis.

The protein belongs to the pseudouridine synthase TruB family. Type 1 subfamily.

It carries out the reaction uridine(55) in tRNA = pseudouridine(55) in tRNA. Responsible for synthesis of pseudouridine from uracil-55 in the psi GC loop of transfer RNAs. This is tRNA pseudouridine synthase B from Ruegeria pomeroyi (strain ATCC 700808 / DSM 15171 / DSS-3) (Silicibacter pomeroyi).